The following is a 358-amino-acid chain: Alternative oxidase, mitochondrial (358 aa).

The helical transmembrane segment at 152–172 (LIRMVFLESVAGVPGMVAGML) threads the bilayer. Fe cation is bound by residues Glu159, Glu198, and His201. The helical transmembrane segment at 217 to 237 (FMIIGAQGVFFNSMFLSYLIS) threads the bilayer. The Fe cation site is built by Glu249, Glu250, Glu306, and His309.

The protein belongs to the alternative oxidase family. The cofactor is Fe cation.

It localises to the mitochondrion inner membrane. Its function is as follows. Catalyzes cyanide-resistant oxygen consumption. May increase respiration when the cytochrome respiratory pathway is restricted, or in response to low temperatures. In Blumeria graminis (Powdery mildew), this protein is Alternative oxidase, mitochondrial.